The chain runs to 417 residues: Serine hydroxymethyltransferase (417 aa).

At Lys54 the chain carries N6-acetyllysine. (6S)-5,6,7,8-tetrahydrofolate contacts are provided by residues Leu121 and Gly125–Leu127. Position 229 is an N6-(pyridoxal phosphate)lysine (Lys229). Lys250, Lys285, and Lys354 each carry N6-acetyllysine. (6S)-5,6,7,8-tetrahydrofolate is bound at residue Ser355–Phe357. Lys375 bears the N6-acetyllysine mark.

It belongs to the SHMT family. In terms of assembly, homodimer. The cofactor is pyridoxal 5'-phosphate.

It is found in the cytoplasm. It catalyses the reaction (6R)-5,10-methylene-5,6,7,8-tetrahydrofolate + glycine + H2O = (6S)-5,6,7,8-tetrahydrofolate + L-serine. It participates in one-carbon metabolism; tetrahydrofolate interconversion. Its pathway is amino-acid biosynthesis; glycine biosynthesis; glycine from L-serine: step 1/1. In terms of biological role, catalyzes the reversible interconversion of serine and glycine with tetrahydrofolate (THF) serving as the one-carbon carrier. This reaction serves as the major source of one-carbon groups required for the biosynthesis of purines, thymidylate, methionine, and other important biomolecules. Also exhibits THF-independent aldolase activity toward beta-hydroxyamino acids, producing glycine and aldehydes, via a retro-aldol mechanism. This is Serine hydroxymethyltransferase from Escherichia coli O1:K1 / APEC.